We begin with the raw amino-acid sequence, 308 residues long: tRNA pseudouridine synthase B (308 aa).

Residue aspartate 44 is the Nucleophile of the active site.

This sequence belongs to the pseudouridine synthase TruB family. Type 1 subfamily.

It catalyses the reaction uridine(55) in tRNA = pseudouridine(55) in tRNA. Functionally, responsible for synthesis of pseudouridine from uracil-55 in the psi GC loop of transfer RNAs. In Bdellovibrio bacteriovorus (strain ATCC 15356 / DSM 50701 / NCIMB 9529 / HD100), this protein is tRNA pseudouridine synthase B.